A 345-amino-acid polypeptide reads, in one-letter code: Phosphoribosylformylglycinamidine cyclo-ligase (345 aa).

It belongs to the AIR synthase family.

The protein resides in the cytoplasm. The enzyme catalyses 2-formamido-N(1)-(5-O-phospho-beta-D-ribosyl)acetamidine + ATP = 5-amino-1-(5-phospho-beta-D-ribosyl)imidazole + ADP + phosphate + H(+). Its pathway is purine metabolism; IMP biosynthesis via de novo pathway; 5-amino-1-(5-phospho-D-ribosyl)imidazole from N(2)-formyl-N(1)-(5-phospho-D-ribosyl)glycinamide: step 2/2. The sequence is that of Phosphoribosylformylglycinamidine cyclo-ligase from Pasteurella multocida (strain Pm70).